Reading from the N-terminus, the 353-residue chain is MILLSSSISLSRPVSSQSFSPPAATSTRRSHSSVTVKCCCSSRRLLKNPELKCSLENLFEIQALRKCFVSGFAAILLLSQAGQGIALDLSSGYQNICQLGSAAAVGENKLTLPSDGDSESMMMMMMRGMTAKNFDPVRYSGRWFEVASLKRGFAGQGQEDCHCTQGVYTFDMKESAIRVDTFCVHGSPDGYITGIRGKVQCVGAEDLEKSETDLEKQEMIKEKCFLRFPTIPFIPKLPYDVIATDYDNYALVSGAKDKGFVQVYSRTPNPGPEFIAKYKNYLAQFGYDPEKIKDTPQDCEVTDAELAAMMSMPGMEQTLTNQFPDLGLRKSVQFDPFTSVFETLKKLVPLYFK.

The segment covering 1-18 (MILLSSSISLSRPVSSQS) has biased composition (low complexity). The segment at 1-27 (MILLSSSISLSRPVSSQSFSPPAATST) is disordered. Residues 1-39 (MILLSSSISLSRPVSSQSFSPPAATSTRRSHSSVTVKCC) constitute a chloroplast transit peptide. Residues Cys163 and Cys299 are joined by a disulfide bond.

The protein belongs to the calycin superfamily. Lipocalin family. In terms of tissue distribution, expressed in leaves at low levels (at protein levels). Present in seeds.

The protein localises to the plastid. It is found in the chloroplast thylakoid lumen. Functionally, lipocalin that prevents thylakoidal membrane lipids peroxidation and confers protection against oxidative stress, especially mediated by singlet oxygen in response to high light and other stress (e.g. heat shocks). Required for seed longevity by ensuring polyunsaturated lipids integrity. The polypeptide is Chloroplastic lipocalin (Arabidopsis thaliana (Mouse-ear cress)).